The following is a 541-amino-acid chain: uncharacterized protein (541 aa).

It localises to the virion. This is an uncharacterized protein from Acanthamoeba polyphaga mimivirus (APMV).